The following is a 784-amino-acid chain: MLHVLWTFWILVAMTDLSRKGCSAQASLSCDAAGVCDGRSRSFTSIPSGLTAAMKSLDLSNNKITSIGHGDLRGCVNLRALILQSSGINTIEEDAFSSLSKLEYLDLSDNHLSNLSSSWFRPLSSLKYLNLLGNPYRILGETPLFLNLTHLQTLRVGNVATFSGIRRTDFAGLTSLDELEIKALSLQNYEPGSLQSIQSIHHLTFHLSQSDFLLGVFEDTLSSVGYLELRDANLDSFYFSELSTDEMNSPMKKLAFQNADLTDESFNELLKLLRYTPELLEVEFDDCTLNGVGDFQPSESDVVRELGKVETLIIRRLHIPRFYSFYDLSTVYTLLEKVKRITVENSKVFLVPCLFSQHLKSLEFLDLSENLMVEEYLKNAACEGSWPSLQTLILRQNRLKSIERTGKILLTLKNLTALDISRNSFQSMPDSCQWPGKMRFLNLSSTGIQAVKMCIPQTLEVLDVSNNNLISFSLFLPLLRELYISRNKLHTLPDASLFPVLLVMKIRENAISTFSKDQLSSFPKLVSLEAGGNHFICSCELLSFTLEHPALVQVLAGWPDSYLCDSPSRLRGQRVQDARPSVLECHQTLLVSGVCCALVLLILLIGGLCHHFHGLWYLRMMWAWLQAKRKPKKAPCRDICYDAFVSYSEQDSYWVENLMVQQLENSEPPFKLCLHKRDFVPGKWIIDNIIDSIEKSHKTLFVLSENFVRSEWCKYELDFSHFRLFDENNDAGILVLLEPIEKKAIPQRFCKLRKIMNTKTYLEWPLDEGQQEVFWVNLRTAIKS.

The first 24 residues, 1 to 24, serve as a signal peptide directing secretion; that stretch reads MLHVLWTFWILVAMTDLSRKGCSA. Residues 25–588 lie on the Extracellular side of the membrane; that stretch reads QASLSCDAAG…RPSVLECHQT (564 aa). Cysteine 30 and cysteine 36 are oxidised to a cystine. LRR repeat units lie at residues 54-77, 78-101, 102-125, 126-150, 151-175, 176-199, 200-223, 224-250, 251-278, 279-308, 309-337, 338-361, 362-388, 389-414, 415-437, 438-457, 458-478, 479-500, and 501-524; these read MKSL…GCVN, LRAL…SLSK, LEYL…PLSS, LKYL…NLTH, LQTL…GLTS, LDEL…SIQS, IHHL…TLSS, VGYL…MNSP, MKKL…YTPE, LLEV…ELGK, VETL…LLEK, VKRI…HLKS, LEFL…SWPS, LQTL…TLKN, LTAL…WPGK, MRFL…CIPQ, TLEV…FLPL, LREL…LFPV, and LLVM…SFPK. N-linked (GlcNAc...) asparagine glycans are attached at residues asparagine 114 and asparagine 147. Cysteine 353 and cysteine 382 are joined by a disulfide. N-linked (GlcNAc...) asparagine glycosylation occurs at asparagine 414. Cysteine 432 and cysteine 454 are joined by a disulfide. Residue asparagine 442 is glycosylated (N-linked (GlcNAc...) asparagine). The LRRCT domain maps to 525–579; that stretch reads LVSLEAGGNHFICSCELLSFTLEHPALVQVLAGWPDSYLCDSPSRLRGQRVQDAR. Residues 589-609 traverse the membrane as a helical segment; it reads LLVSGVCCALVLLILLIGGLC. Topologically, residues 610–784 are cytoplasmic; that stretch reads HHFHGLWYLR…WVNLRTAIKS (175 aa). The region spanning 639 to 782 is the TIR domain; the sequence is ICYDAFVSYS…VFWVNLRTAI (144 aa). A Glycyl lysine isopeptide (Lys-Gly) (interchain with G-Cter in ubiquitin) cross-link involves residue lysine 754. An ATG16L1-binding motif motif is present at residues 761 to 778; it reads YLEWPLDEGQQEVFWVNL.

The protein belongs to the Toll-like receptor family. In terms of assembly, interacts with LY96, TLR1 and TLR6 (via extracellular domain). TLR2 seems to exist in heterodimers with either TLR1 or TLR6 before stimulation by the ligand. The heterodimers form bigger oligomers in response to their corresponding ligands as well as further heterotypic associations with other receptors such as CD14 and/or CD36. Binds MYD88 (via TIR domain). Interacts with TICAM1. Interacts with CNPY3. Interacts with ATG16L1. Interacts with PPP1R11. Interacts with TICAM2. Interacts with TIRAP. Ubiquitinated at Lys-754 by PPP1R11, leading to its degradation. Deubiquitinated by USP2. Post-translationally, glycosylation of Asn-442 is critical for secretion of the N-terminal ectodomain of TLR2.

The protein localises to the membrane. Its subcellular location is the cytoplasmic vesicle. The protein resides in the phagosome membrane. It localises to the membrane raft. Cooperates with LY96 to mediate the innate immune response to bacterial lipoproteins and other microbial cell wall components. Cooperates with TLR1 or TLR6 to mediate the innate immune response to bacterial lipoproteins or lipopeptides. Acts via MYD88 and TRAF6, leading to NF-kappa-B activation, cytokine secretion and the inflammatory response. May also promote apoptosis in response to lipoproteins. Forms activation clusters composed of several receptors depending on the ligand, these clusters trigger signaling from the cell surface and subsequently are targeted to the Golgi in a lipid-raft dependent pathway. Forms the cluster TLR2:TLR6:CD14:CD36 in response to diacylated lipopeptides and TLR2:TLR1:CD14 in response to triacylated lipopeptides. The sequence is that of Toll-like receptor 2 (TLR2) from Cricetulus griseus (Chinese hamster).